An 861-amino-acid polypeptide reads, in one-letter code: Putative glutamate--cysteine ligase 2-2 (861 aa).

The segment at 1-372 is carboxylate-amine ligase; it reads MSDARIVAVG…RDVPPAGAAA (372 aa). The segment at 373–861 is unknown; that stretch reads ALGSAPAVSA…GSKDTWIPRR (489 aa).

The protein in the N-terminal section; belongs to the glutamate--cysteine ligase type 2 family. YbdK subfamily.

It catalyses the reaction L-cysteine + L-glutamate + ATP = gamma-L-glutamyl-L-cysteine + ADP + phosphate + H(+). ATP-dependent carboxylate-amine ligase which exhibits weak glutamate--cysteine ligase activity. The protein is Putative glutamate--cysteine ligase 2-2 of Frankia casuarinae (strain DSM 45818 / CECT 9043 / HFP020203 / CcI3).